The sequence spans 247 residues: uncharacterized protein (247 aa).

Residues leucine 11, asparagine 85, and lysine 119 each coordinate NADP(+). Serine 136 functions as the Proton donor in the catalytic mechanism. NADP(+) contacts are provided by tyrosine 150, lysine 154, valine 181, and threonine 183. Tyrosine 150 acts as the Proton acceptor in catalysis. The active-site Lowers pKa of active site Tyr is lysine 154.

It belongs to the short-chain dehydrogenases/reductases (SDR) family.

This is an uncharacterized protein from Schizosaccharomyces pombe (strain 972 / ATCC 24843) (Fission yeast).